Reading from the N-terminus, the 100-residue chain is Large ribosomal subunit protein uL23 (100 aa).

It belongs to the universal ribosomal protein uL23 family. As to quaternary structure, part of the 50S ribosomal subunit. Contacts protein L29, and trigger factor when it is bound to the ribosome.

One of the early assembly proteins it binds 23S rRNA. One of the proteins that surrounds the polypeptide exit tunnel on the outside of the ribosome. Forms the main docking site for trigger factor binding to the ribosome. The protein is Large ribosomal subunit protein uL23 of Shewanella halifaxensis (strain HAW-EB4).